Here is a 787-residue protein sequence, read N- to C-terminus: Aminodeoxychorismate synthase (787 aa).

Residues 16–233 (HVLFIDSYDS…LKLSFINNVK (218 aa)) enclose the Glutamine amidotransferase type-1 domain. Residues Cys-112, His-207, and Glu-209 contribute to the active site. The tract at residues 304–787 (MSSSVISENT…KLESNLQIFM (484 aa)) is PABB component.

It in the C-terminal section; belongs to the anthranilate synthase component I family.

It is found in the cytoplasm. It carries out the reaction chorismate + L-glutamine = 4-amino-4-deoxychorismate + L-glutamate. Its pathway is cofactor biosynthesis; tetrahydrofolate biosynthesis; 4-aminobenzoate from chorismate: step 1/2. Functionally, catalyzes the biosynthesis of 4-amino-4-deoxychorismate (ADC) from chorismate and glutamine. Required for the synthesis of 4-aminobenzoate (PABA), an important component in tetrahydrofolate biosynthesis. In Saccharomyces cerevisiae (strain ATCC 204508 / S288c) (Baker's yeast), this protein is Aminodeoxychorismate synthase (ABZ1).